A 304-amino-acid polypeptide reads, in one-letter code: MSKKLTFQEIILTLQQFWNDQGCMLMQAYDNEKGAGTMSPYTFLRAIGPEPWNAAYVEPSRRPADGRYGENPNRLYQHHQFQVVMKPSPSNVQELYLKSLELLGINPLEHDIRFVEDNWENPSTGSAGLGWEVWLDGMEITQFTYFQQVGGLQTGPVTSEVTYGLERLASYIQEVDSVYDIEWAPGVKYGEIFTQPEYEHSKYSFEISDQVMLLENFEKFEREAKRALEEGLVHPAYDYVLKCSHTFNLLDARGAVSVTERAGYITRIRNLARVVAKTFVAERKKLGFPLLDEETRIKLLAEED.

This sequence belongs to the class-II aminoacyl-tRNA synthetase family. Tetramer of two alpha and two beta subunits.

The protein localises to the cytoplasm. It carries out the reaction tRNA(Gly) + glycine + ATP = glycyl-tRNA(Gly) + AMP + diphosphate. In Streptococcus agalactiae serotype III (strain NEM316), this protein is Glycine--tRNA ligase alpha subunit.